The following is a 247-amino-acid chain: Probable transcriptional regulatory protein Gura_1416 (247 aa).

This sequence belongs to the TACO1 family.

The protein resides in the cytoplasm. In Geotalea uraniireducens (strain Rf4) (Geobacter uraniireducens), this protein is Probable transcriptional regulatory protein Gura_1416.